Reading from the N-terminus, the 417-residue chain is Glucose-1-phosphatase (417 aa).

Residues Met-1–Ala-23 form the signal peptide. Substrate is bound at residue Arg-41. His-42 serves as the catalytic Nucleophile. Arg-45, Arg-118, and Glu-220 together coordinate substrate. Asp-315 acts as the Proton donor in catalysis.

The protein belongs to the histidine acid phosphatase family. In terms of assembly, homodimer.

The protein resides in the periplasm. The enzyme catalyses alpha-D-glucose 1-phosphate + H2O = D-glucose + phosphate. The polypeptide is Glucose-1-phosphatase (agp) (Providencia rettgeri).